The primary structure comprises 301 residues: MFALTFLGTSASVPSAERNHPALLVEAAGKRILIDCGEGTQRQLLRSGAGFRRLDRILLTHAHLDHVLGIPGLFSTLGLRQSSDVMTIHGGPGTLDIVIRMLAGLWGAGRAPIPVEFAALSEGQVIDAGGFTIDCFPVRHRDTDSFGFVFQSPARRHLLPDRLASLGVPDGPLRGELAQGRPVVIEDGRTIDPEDVLGPATGGRKLVVIGDTETTEGLSQYVADADMLVIEATFLDRDASIARDYGHLTAAEAAAFAAANNVGQLVLTHMSGRYEDEEILAEAARIFPNSRIAADFDHIVV.

Zn(2+) contacts are provided by His61, His63, Asp65, His66, His140, Asp211, and His269. Asp65 acts as the Proton acceptor in catalysis.

It belongs to the RNase Z family. Homodimer. Zn(2+) is required as a cofactor.

It catalyses the reaction Endonucleolytic cleavage of RNA, removing extra 3' nucleotides from tRNA precursor, generating 3' termini of tRNAs. A 3'-hydroxy group is left at the tRNA terminus and a 5'-phosphoryl group is left at the trailer molecule.. In terms of biological role, zinc phosphodiesterase, which displays some tRNA 3'-processing endonuclease activity. Probably involved in tRNA maturation, by removing a 3'-trailer from precursor tRNA. This Bradyrhizobium diazoefficiens (strain JCM 10833 / BCRC 13528 / IAM 13628 / NBRC 14792 / USDA 110) protein is Ribonuclease Z.